Reading from the N-terminus, the 26-residue chain is Protein YsdD (26 aa).

The segment at 1–26 is disordered; that stretch reads MTIDKNWLNRSNKDPGRSLRFTHQPV.

This chain is Protein YsdD, found in Escherichia coli (strain K12).